Consider the following 103-residue polypeptide: Small ribosomal subunit protein uS10 (103 aa).

It belongs to the universal ribosomal protein uS10 family. As to quaternary structure, part of the 30S ribosomal subunit.

Involved in the binding of tRNA to the ribosomes. The protein is Small ribosomal subunit protein uS10 of Campylobacter fetus subsp. fetus (strain 82-40).